We begin with the raw amino-acid sequence, 151 residues long: Chaperonin GroEL (151 aa).

Residue 41–45 (DGTTT) participates in ATP binding.

This sequence belongs to the chaperonin (HSP60) family. As to quaternary structure, forms a cylinder of 14 subunits composed of two heptameric rings stacked back-to-back. Interacts with the co-chaperonin GroES.

The protein resides in the cytoplasm. The enzyme catalyses ATP + H2O + a folded polypeptide = ADP + phosphate + an unfolded polypeptide.. Together with its co-chaperonin GroES, plays an essential role in assisting protein folding. The GroEL-GroES system forms a nano-cage that allows encapsulation of the non-native substrate proteins and provides a physical environment optimized to promote and accelerate protein folding. This Mycolicibacterium fortuitum (Mycobacterium fortuitum) protein is Chaperonin GroEL.